The chain runs to 275 residues: Large ribosomal subunit protein uL2 (275 aa).

Positions 225-275 are disordered; sequence MNPVDHPHGGGEGRSPIGRPPVTPWGKPALGTRTRNKKKASSKLIVKRRTK. Positions 258 to 275 are enriched in basic residues; sequence TRNKKKASSKLIVKRRTK.

This sequence belongs to the universal ribosomal protein uL2 family. In terms of assembly, part of the 50S ribosomal subunit. Forms a bridge to the 30S subunit in the 70S ribosome.

Functionally, one of the primary rRNA binding proteins. Required for association of the 30S and 50S subunits to form the 70S ribosome, for tRNA binding and peptide bond formation. It has been suggested to have peptidyltransferase activity; this is somewhat controversial. Makes several contacts with the 16S rRNA in the 70S ribosome. This chain is Large ribosomal subunit protein uL2, found in Desulforudis audaxviator (strain MP104C).